The sequence spans 535 residues: MSLVKKFATVGGATLGSRLFGFIRETFMAAALGTGPVADAFNTAFRLPNTFRRLFAEGAFNSAFVPLFAKEIEAHGMDGARRFSEEVFGVLFTVLLLLTIAMELSMPFIVGQLIAPGFADDPAKFTSTVTFATIMFPYLACMSLAAMMAGMLNSLHRYFAAAIAPVFLNFILIAVLAYAWYSGQDAVAVGYDLSWGVLAAGLVQLAIVWVAVRNAGIRIGFRRPRLTPNVKRLLVLALPAAITGGITQINLLINTNIASAKEGAVSSLVYADRIYQLPLGVVGIAVATVLLPELARALRGGNLNEAANLQNRSVEFTLFLTLPAAAALLVMSEPIVRLLFERGQFSPESTVVVGHILAIYGLGLPAFVLIKAFIPGFFAREDTRTPMIFAGISVAVNVSLALTLFPSLAASGIATAEIVAGWVNALLLFATLVWRGHWGRDIPLLTRIPRLVIAAAIMAAALYVAVDWLAFPLSSAAPLSTRALTLCGLIAAAMAIYFAVAFGIGGASLSMIRRSVKRGASASSVERASEGADRQ.

Helical transmembrane passes span 90-110 (VLFT…PFIV), 131-151 (FATI…MAGM), 159-179 (FAAA…LAYA), 192-212 (DLSW…WVAV), 233-253 (LLVL…NLLI), 274-294 (IYQL…LPEL), 316-336 (FTLF…EPIV), 350-370 (TVVV…FVLI), 388-408 (IFAG…FPSL), 413-433 (IATA…ATLV), 451-471 (LVIA…WLAF), and 484-504 (LTLC…AFGI).

This sequence belongs to the MurJ/MviN family.

It localises to the cell inner membrane. It functions in the pathway cell wall biogenesis; peptidoglycan biosynthesis. Functionally, involved in peptidoglycan biosynthesis. Transports lipid-linked peptidoglycan precursors from the inner to the outer leaflet of the cytoplasmic membrane. The sequence is that of Probable lipid II flippase MurJ from Rhizobium meliloti (strain 1021) (Ensifer meliloti).